Here is a 453-residue protein sequence, read N- to C-terminus: Folate transporter 1 (453 aa).

N-linked (GlcNAc...) asparagine glycosylation is present at Asn36. 5 helical membrane-spanning segments follow: residues 48–68, 73–93, 102–122, 136–156, and 161–181; these read PYWT…TDIL, IVMI…FGKG, VSFG…YSIV, AAAL…ISTH, and LVLN…AIFL. Residue Asn260 is glycosylated (N-linked (GlcNAc...) asparagine). The next 5 helical transmembrane spans lie at 276-296, 306-326, 331-351, 368-388, and 401-421; these read VANG…SLFI, HGQM…YLCS, VLVA…LITA, IFGC…LVVV, and FVIY…FFMI.

Belongs to the reduced folate carrier (RFC) transporter (TC 2.A.48) family. In terms of tissue distribution, highly expressed in pharynx and posterior part of the intestine. Expressed at lower levels in the body wall muscles, head muscles, and vulva muscles. Highly expressed in the intestine of the early larva, levels decrease in the later stages of development.

It is found in the membrane. Its function is as follows. Folate transporter. The protein is Folate transporter 1 (folt-1) of Caenorhabditis elegans.